Consider the following 283-residue polypeptide: 2-hydroxymuconate semialdehyde hydrolase (283 aa).

The region spanning 32 to 262 is the AB hydrolase-1 domain; sequence LMMIHGSGPG…QCGHWTQIEH (231 aa). Residues Ser107, Asp228, and His256 contribute to the active site.

Belongs to the DmpD/TodF/XylF esterase family.

The enzyme catalyses (2Z,4E)-2-hydroxy-6-oxohexa-2,4-dienoate + H2O = 2-oxopent-4-enoate + formate + H(+). The protein operates within aromatic compound metabolism; benzoate degradation via hydroxylation. Functionally, catalyzes the conversion of 2-hydroxymuconate semialdehyde to 2-hydroxypent-2,4-dienoate. The sequence is that of 2-hydroxymuconate semialdehyde hydrolase (dmpD) from Pseudomonas sp. (strain CF600).